The primary structure comprises 475 residues: ATP synthase subunit beta 1 (475 aa).

153 to 160 (GGAGVGKT) is an ATP binding site.

This sequence belongs to the ATPase alpha/beta chains family. As to quaternary structure, F-type ATPases have 2 components, CF(1) - the catalytic core - and CF(0) - the membrane proton channel. CF(1) has five subunits: alpha(3), beta(3), gamma(1), delta(1), epsilon(1). CF(0) has three main subunits: a(1), b(2) and c(9-12). The alpha and beta chains form an alternating ring which encloses part of the gamma chain. CF(1) is attached to CF(0) by a central stalk formed by the gamma and epsilon chains, while a peripheral stalk is formed by the delta and b chains.

It is found in the cell membrane. It carries out the reaction ATP + H2O + 4 H(+)(in) = ADP + phosphate + 5 H(+)(out). Functionally, produces ATP from ADP in the presence of a proton gradient across the membrane. The catalytic sites are hosted primarily by the beta subunits. In Mycoplasmopsis pulmonis (strain UAB CTIP) (Mycoplasma pulmonis), this protein is ATP synthase subunit beta 1.